We begin with the raw amino-acid sequence, 253 residues long: 20 kDa chaperonin, chloroplastic (253 aa).

A chloroplast-targeting transit peptide spans 1 to 50 (MAATQLTASPVTMSARSLASLDGLRASSVKFSSLKPGTLRQSQFRRLVVK). 2 cpn-10 domain regions span residues 60–153 (TSIK…GILE) and 159–252 (DLKP…MAIL). T212 is subject to Phosphothreonine.

Belongs to the GroES chaperonin family. In terms of assembly, homotetramer. Forms stable complexes with CPN60 in the presence of ATP. Interacts with FSD1. Interacts with CLPT1 and CLPT2. Interacts with CHLH. Interacts with SPY. As to expression, ubiquitous. Most abundant in leaves and inflorescence. Low levels found in roots.

Its subcellular location is the plastid. The protein localises to the chloroplast. Functionally, seems to function only as a co-chaperone, along with CPN60, and in certain cases is essential for the discharge of biologically active proteins from CPN60. Required to activate the iron superoxide dismutases (FeSOD). Its function is as follows. Involved in abscisic acid (ABA) signaling, independently of its co-chaperone role. Acts as a negative regulator of the CHLH-WRKY40 coupled ABA signaling pathway, downstream of CHLH and upstream of WRKY40. The protein is 20 kDa chaperonin, chloroplastic (CPN20) of Arabidopsis thaliana (Mouse-ear cress).